The primary structure comprises 476 residues: GTPase Der (476 aa).

2 consecutive EngA-type G domains span residues 3 to 167 (FTVA…GEER) and 205 to 380 (LRVA…KVWN). GTP contacts are provided by residues 9-16 (GRPNVGKS), 56-60 (DTAGL), 119-122 (NKSE), 211-218 (GRPNAGKS), 258-262 (DTAGM), and 323-326 (NKWD). In terms of domain architecture, KH-like spans 381–465 (RRISTARLNR…PIRVHFRASE (85 aa)).

Belongs to the TRAFAC class TrmE-Era-EngA-EngB-Septin-like GTPase superfamily. EngA (Der) GTPase family. As to quaternary structure, associates with the 50S ribosomal subunit.

In terms of biological role, GTPase that plays an essential role in the late steps of ribosome biogenesis. This chain is GTPase Der, found in Rhizobium meliloti (strain 1021) (Ensifer meliloti).